A 421-amino-acid polypeptide reads, in one-letter code: Large ribosomal subunit protein uL4 (421 aa).

Residue alanine 2 is modified to N-acetylalanine. Lysine 14 bears the N6-acetyllysine mark. At arginine 97 the chain carries Omega-N-methylarginine. Lysine 106 carries the N6-acetyllysine modification. Lysine 239 participates in a covalent cross-link: Glycyl lysine isopeptide (Lys-Gly) (interchain with G-Cter in SUMO2). N6-acetyllysine is present on lysine 259. Threonine 266 is subject to Phosphothreonine. Serine 290 and serine 295 each carry phosphoserine. Citrulline is present on arginine 300. Residue lysine 327 forms a Glycyl lysine isopeptide (Lys-Gly) (interchain with G-Cter in SUMO2) linkage. 2 positions are modified to N6-acetyllysine: lysine 333 and lysine 353. Position 364 is an N6-acetyllysine; alternate (lysine 364). Lysine 364 is covalently cross-linked (Glycyl lysine isopeptide (Lys-Gly) (interchain with G-Cter in SUMO1); alternate). Residue serine 365 is modified to Phosphoserine. Residues 365–379 (SEKIVPEKGAGDKKP) are compositionally biased toward basic and acidic residues. Residues 365 to 421 (SEKIVPEKGAGDKKPAVGKKGKKPVDAKKLKKPAGKKVVTKKPAEKKPTTEEKKSAA) are disordered. The segment covering 393–404 (KLKKPAGKKVVT) has biased composition (basic residues). The span at 406 to 421 (KPAEKKPTTEEKKSAA) shows a compositional bias: basic and acidic residues.

Belongs to the universal ribosomal protein uL4 family. In terms of assembly, component of the large ribosomal subunit. May bind IPO9 with low affinity. Interacts with RBM3. Post-translationally, citrullinated by PADI4.

Its subcellular location is the cytoplasm. In terms of biological role, component of the large ribosomal subunit. The ribosome is a large ribonucleoprotein complex responsible for the synthesis of proteins in the cell. This chain is Large ribosomal subunit protein uL4 (Rpl4), found in Rattus norvegicus (Rat).